The chain runs to 98 residues: ESAT-6-like protein EsxJ (98 aa).

Belongs to the WXG100 family. CFP-10 subfamily.

The protein localises to the secreted. In Mycobacterium bovis (strain ATCC BAA-935 / AF2122/97), this protein is ESAT-6-like protein EsxJ.